A 161-amino-acid chain; its full sequence is Type II secretion system protein M (161 aa).

Residues 1–16 (MNELRRRWQVMSQRER) are Cytoplasmic-facing. A helical membrane pass occupies residues 17–37 (LMALACGGLVVLCLLYYLIWA). The Periplasmic portion of the chain corresponds to 38–161 (PWQESVRQWQ…VTRLSLERVL (124 aa)).

This sequence belongs to the GSP M family. In terms of assembly, type II secretion system is composed of four main components: the outer membrane complex, the inner membrane complex, the cytoplasmic secretion ATPase and the periplasm-spanning pseudopilus. Forms homodimers. Interacts with OutL/GspL. Interacts with OutE/GspE and OutF/GspF.

The protein resides in the cell inner membrane. In terms of biological role, inner membrane component of the type II secretion system required for the energy-dependent secretion of extracellular factors such as proteases and toxins from the periplasm. Plays a role in the complex assembly and recruits OutL resulting in a stable complex in the inner membrane. Provides thus a link between the energy-providing OutE protein in the cytoplasm and the rest of the T2SS machinery. This Dickeya chrysanthemi (Pectobacterium chrysanthemi) protein is Type II secretion system protein M (outM).